The following is a 192-amino-acid chain: ATP synthase subunit b (192 aa).

Residues 7–27 traverse the membrane as a helical segment; it reads LLLVLGVMLLATGVALAAGGE.

This sequence belongs to the ATPase B chain family. As to quaternary structure, F-type ATPases have 2 components, F(1) - the catalytic core - and F(0) - the membrane proton channel. F(1) has five subunits: alpha(3), beta(3), gamma(1), delta(1), epsilon(1). F(0) has three main subunits: a(1), b(2) and c(10-14). The alpha and beta chains form an alternating ring which encloses part of the gamma chain. F(1) is attached to F(0) by a central stalk formed by the gamma and epsilon chains, while a peripheral stalk is formed by the delta and b chains.

It localises to the cell inner membrane. In terms of biological role, f(1)F(0) ATP synthase produces ATP from ADP in the presence of a proton or sodium gradient. F-type ATPases consist of two structural domains, F(1) containing the extramembraneous catalytic core and F(0) containing the membrane proton channel, linked together by a central stalk and a peripheral stalk. During catalysis, ATP synthesis in the catalytic domain of F(1) is coupled via a rotary mechanism of the central stalk subunits to proton translocation. Functionally, component of the F(0) channel, it forms part of the peripheral stalk, linking F(1) to F(0). In Oleidesulfovibrio alaskensis (strain ATCC BAA-1058 / DSM 17464 / G20) (Desulfovibrio alaskensis), this protein is ATP synthase subunit b.